The following is a 189-amino-acid chain: Large ribosomal subunit protein eL19A (189 aa).

Lys21 participates in a covalent cross-link: Glycyl lysine isopeptide (Lys-Gly) (interchain with G-Cter in ubiquitin). A phosphoserine mark is found at Ser30 and Ser37. Glycyl lysine isopeptide (Lys-Gly) (interchain with G-Cter in ubiquitin) cross-links involve residues Lys53 and Lys60. The segment at 58–85 (HSKSRTRAHAQSKREGRHSGYGKRKGTR) is disordered. A compositionally biased stretch (basic residues) spans 59-68 (SKSRTRAHAQ). Residue Ser91 is modified to Phosphoserine. Residues Lys146 and Lys186 each participate in a glycyl lysine isopeptide (Lys-Gly) (interchain with G-Cter in ubiquitin) cross-link. Residues 164–189 (LKNRAARDRRAQRVAEKRDALLKEDA) are disordered.

Belongs to the eukaryotic ribosomal protein eL19 family. Component of the large ribosomal subunit (LSU). Mature yeast ribosomes consist of a small (40S) and a large (60S) subunit. The 40S small subunit contains 1 molecule of ribosomal RNA (18S rRNA) and 33 different proteins (encoded by 57 genes). The large 60S subunit contains 3 rRNA molecules (25S, 5.8S and 5S rRNA) and 46 different proteins (encoded by 81 genes). eL19 lies in close proximity to the binding site for eukaryotic initiation factor eIF4G.

The protein resides in the cytoplasm. Its function is as follows. Component of the ribosome, a large ribonucleoprotein complex responsible for the synthesis of proteins in the cell. The small ribosomal subunit (SSU) binds messenger RNAs (mRNAs) and translates the encoded message by selecting cognate aminoacyl-transfer RNA (tRNA) molecules. The large subunit (LSU) contains the ribosomal catalytic site termed the peptidyl transferase center (PTC), which catalyzes the formation of peptide bonds, thereby polymerizing the amino acids delivered by tRNAs into a polypeptide chain. The nascent polypeptides leave the ribosome through a tunnel in the LSU and interact with protein factors that function in enzymatic processing, targeting, and the membrane insertion of nascent chains at the exit of the ribosomal tunnel. eL19 may play a role in the last stages of translation initiation, in particular subunit joining and shedding/releasing factors. This Saccharomyces cerevisiae (strain ATCC 204508 / S288c) (Baker's yeast) protein is Large ribosomal subunit protein eL19A.